A 341-amino-acid polypeptide reads, in one-letter code: 5-formaminoimidazole-4-carboxamide-1-(beta)-D-ribofuranosyl 5'-monophosphate synthetase (341 aa).

5-amino-1-(5-phospho-beta-D-ribosyl)imidazole-4-carboxamide is bound by residues histidine 27 and serine 92. Residues 113–328 (RELLRWEADQ…MGERIAHEIK (216 aa)) enclose the ATP-grasp domain. ATP is bound by residues 143-195 (AEEV…VPAY) and glutamate 217. Asparagine 237 is a binding site for 5-amino-1-(5-phospho-beta-D-ribosyl)imidazole-4-carboxamide. 2 residues coordinate Mg(2+): glutamate 276 and glutamate 289.

The protein belongs to the phosphohexose mutase family. It depends on Mg(2+) as a cofactor. The cofactor is Mn(2+).

The catalysed reaction is 5-amino-1-(5-phospho-beta-D-ribosyl)imidazole-4-carboxamide + formate + ATP = 5-formamido-1-(5-phospho-D-ribosyl)imidazole-4-carboxamide + ADP + phosphate. It functions in the pathway purine metabolism; IMP biosynthesis via de novo pathway; 5-formamido-1-(5-phospho-D-ribosyl)imidazole-4-carboxamide from 5-amino-1-(5-phospho-D-ribosyl)imidazole-4-carboxamide (formate route): step 1/1. In terms of biological role, catalyzes the ATP- and formate-dependent formylation of 5-aminoimidazole-4-carboxamide-1-beta-d-ribofuranosyl 5'-monophosphate (AICAR) to 5-formaminoimidazole-4-carboxamide-1-beta-d-ribofuranosyl 5'-monophosphate (FAICAR) in the absence of folates. This chain is 5-formaminoimidazole-4-carboxamide-1-(beta)-D-ribofuranosyl 5'-monophosphate synthetase, found in Pyrobaculum aerophilum (strain ATCC 51768 / DSM 7523 / JCM 9630 / CIP 104966 / NBRC 100827 / IM2).